A 451-amino-acid chain; its full sequence is Bifunctional protein GlmU (451 aa).

Residues 1–225 (MVVVAILAAG…YQEILGINDR (225 aa)) form a pyrophosphorylase region. UDP-N-acetyl-alpha-D-glucosamine-binding positions include 7 to 10 (LAAG), Lys-21, Gln-72, and 77 to 78 (GT). Asp-102 serves as a coordination point for Mg(2+). Positions 139, 154, 169, and 223 each coordinate UDP-N-acetyl-alpha-D-glucosamine. Residue Asn-223 participates in Mg(2+) binding. Residues 226-246 (LQLATAYEILQRRVKEQWMMA) are linker. The N-acetyltransferase stretch occupies residues 247–451 (GVTLIDPNSI…PGWRKKSGES (205 aa)). UDP-N-acetyl-alpha-D-glucosamine contacts are provided by Arg-328 and Lys-346. His-358 functions as the Proton acceptor in the catalytic mechanism. 2 residues coordinate UDP-N-acetyl-alpha-D-glucosamine: Tyr-361 and Asn-372. Acetyl-CoA-binding positions include Ala-375, 381-382 (NY), Ser-400, Ala-418, and Arg-435.

In the N-terminal section; belongs to the N-acetylglucosamine-1-phosphate uridyltransferase family. It in the C-terminal section; belongs to the transferase hexapeptide repeat family. As to quaternary structure, homotrimer. It depends on Mg(2+) as a cofactor.

It is found in the cytoplasm. The enzyme catalyses alpha-D-glucosamine 1-phosphate + acetyl-CoA = N-acetyl-alpha-D-glucosamine 1-phosphate + CoA + H(+). The catalysed reaction is N-acetyl-alpha-D-glucosamine 1-phosphate + UTP + H(+) = UDP-N-acetyl-alpha-D-glucosamine + diphosphate. The protein operates within nucleotide-sugar biosynthesis; UDP-N-acetyl-alpha-D-glucosamine biosynthesis; N-acetyl-alpha-D-glucosamine 1-phosphate from alpha-D-glucosamine 6-phosphate (route II): step 2/2. Its pathway is nucleotide-sugar biosynthesis; UDP-N-acetyl-alpha-D-glucosamine biosynthesis; UDP-N-acetyl-alpha-D-glucosamine from N-acetyl-alpha-D-glucosamine 1-phosphate: step 1/1. It participates in bacterial outer membrane biogenesis; LPS lipid A biosynthesis. In terms of biological role, catalyzes the last two sequential reactions in the de novo biosynthetic pathway for UDP-N-acetylglucosamine (UDP-GlcNAc). The C-terminal domain catalyzes the transfer of acetyl group from acetyl coenzyme A to glucosamine-1-phosphate (GlcN-1-P) to produce N-acetylglucosamine-1-phosphate (GlcNAc-1-P), which is converted into UDP-GlcNAc by the transfer of uridine 5-monophosphate (from uridine 5-triphosphate), a reaction catalyzed by the N-terminal domain. The sequence is that of Bifunctional protein GlmU from Trichormus variabilis (strain ATCC 29413 / PCC 7937) (Anabaena variabilis).